The sequence spans 400 residues: Subtilisin-like protease 7 (400 aa).

The first 20 residues, 1–20, serve as a signal peptide directing secretion; the sequence is MGFITKAIPLALAAASVING. Residues 21–119 constitute a propeptide that is removed on maturation; the sequence is AEILETRAGV…IERDARVQIN (99 aa). Residues 36-118 form the Inhibitor I9 domain; it reads KYIVVMNDGM…YIERDARVQI (83 aa). Residues 129 to 400 form the Peptidase S8 domain; that stretch reads SWGLARVGSK…GKLINNGSGK (272 aa). Active-site charge relay system residues include aspartate 161 and histidine 192. The N-linked (GlcNAc...) asparagine glycan is linked to asparagine 252. Serine 346 functions as the Charge relay system in the catalytic mechanism. Residue asparagine 396 is glycosylated (N-linked (GlcNAc...) asparagine).

Belongs to the peptidase S8 family.

The protein resides in the secreted. Secreted subtilisin-like serine protease with keratinolytic activity that contributes to pathogenicity. The polypeptide is Subtilisin-like protease 7 (SUB7) (Arthroderma gypseum (strain ATCC MYA-4604 / CBS 118893) (Microsporum gypseum)).